The chain runs to 143 residues: Synuclein (143 aa).

Repeat copies occupy residues 20–30, 31–41, and 42–52. A 5 X 11 AA tandem repeats of [EGST]-K-T-K-[EQ]-[GQ]-[VA]-X(4) region spans residues 20-78; it reads EKTKQGVQDAAEKTKQGVQDAAEKTKEGVMYVGTKTKEGVVQSVNTVTEKTKEQANVVG. A 4; approximate repeat occupies 53 to 67; that stretch reads TKTKEGVVQSVNTVT. The stretch at 68–78 is repeat 5; that stretch reads EKTKEQANVVG. Positions 113–143 are disordered; the sequence is REIPAEQVAEGKQTTQEPLVEATEATEETGK.

Belongs to the synuclein family. Nervous system tissue. Found in the electric lobe, the brain and the spinal cord.

The protein resides in the nucleus. Functionally, may have a role in synaptic regulation or signal transduction. This is Synuclein from Tetronarce californica (Pacific electric ray).